The chain runs to 689 residues: UvrABC system protein C (689 aa).

Residues 16–95 enclose the GIY-YIG domain; the sequence is TNPGVYRFRD…IKEFAPRFNI (80 aa). Positions 208–243 constitute a UVR domain; that stretch reads KPYIRELTRQMNEAAECMDFETAAARRDDVGALERV. A disordered region spans residues 316–337; that stretch reads LAPAASGRRRTARHGSEDVVGQ.

Belongs to the UvrC family. Interacts with UvrB in an incision complex.

It localises to the cytoplasm. In terms of biological role, the UvrABC repair system catalyzes the recognition and processing of DNA lesions. UvrC both incises the 5' and 3' sides of the lesion. The N-terminal half is responsible for the 3' incision and the C-terminal half is responsible for the 5' incision. The sequence is that of UvrABC system protein C from Kocuria rhizophila (strain ATCC 9341 / DSM 348 / NBRC 103217 / DC2201).